Consider the following 228-residue polypeptide: 2,3-bisphosphoglycerate-dependent phosphoglycerate mutase (228 aa).

Substrate-binding positions include arginine 8–asparagine 15, threonine 21–glycine 22, arginine 60, glutamate 87–tyrosine 90, lysine 98, arginine 114–arginine 115, and glycine 180–asparagine 181. The active-site Tele-phosphohistidine intermediate is the histidine 9. The active-site Proton donor/acceptor is the glutamate 87.

It belongs to the phosphoglycerate mutase family. BPG-dependent PGAM subfamily. In terms of assembly, homodimer.

It catalyses the reaction (2R)-2-phosphoglycerate = (2R)-3-phosphoglycerate. Its pathway is carbohydrate degradation; glycolysis; pyruvate from D-glyceraldehyde 3-phosphate: step 3/5. In terms of biological role, catalyzes the interconversion of 2-phosphoglycerate and 3-phosphoglycerate. The polypeptide is 2,3-bisphosphoglycerate-dependent phosphoglycerate mutase (Novosphingobium aromaticivorans (strain ATCC 700278 / DSM 12444 / CCUG 56034 / CIP 105152 / NBRC 16084 / F199)).